A 418-amino-acid polypeptide reads, in one-letter code: AA14 family lytic polysaccharide monooxygenase B (418 aa).

A signal peptide spans 1–18 (MIPVFLAAVAAFLPLTSG). 3 N-linked (GlcNAc...) asparagine glycosylation sites follow: N31, N94, and N151. Disulfide bonds link C85-C108, C127-C154, C171-C176, and C178-C200. N201 and N235 each carry an N-linked (GlcNAc...) asparagine glycan. C220 and C236 form a disulfide bridge. The span at 307-343 (AAATPAPSSSGSSPSSSSPGSSSTASTTSTSGPRPSA) shows a compositional bias: low complexity. Positions 307–364 (AAATPAPSSSGSSPSSSSPGSSSTASTTSTSGPRPSARGFRRSTGERPPTGVPTPRKS) are disordered.

Belongs to the polysaccharide monooxygenase AA14 family. The cofactor is Cu(2+).

The protein localises to the secreted. Its function is as follows. Lytic polysaccharide monooxygenase (LPMO) that oxidatively cleaves xylan with both C1 and C4 regioselectivity and that specifically targets the protective shield made by heteroxylans that cover cellulose microfibrils in wood. Catalysis by LPMOs requires the reduction of the active-site copper from Cu(II) to Cu(I) by a reducing agent and H(2)O(2) or O(2) as a cosubstrate. Cleavage occurs only when xylans are bound to cellulose and not when they are in solution. Increases the efficiency of wood saccharification through oxidative cleavage of highly refractory xylan-coated cellulose fibers via synergistic relationship with xylan-active enzymes, xylobiohydrolases and cellobiohydrolases. The sequence is that of AA14 family lytic polysaccharide monooxygenase B from Trametes coccinea (strain BRFM310) (Pycnoporus coccineus).